The chain runs to 363 residues: DNA replication and repair protein RecF (363 aa).

Residue 30–37 (GDNAQGKT) participates in ATP binding.

The protein belongs to the RecF family.

It localises to the cytoplasm. Its function is as follows. The RecF protein is involved in DNA metabolism; it is required for DNA replication and normal SOS inducibility. RecF binds preferentially to single-stranded, linear DNA. It also seems to bind ATP. The sequence is that of DNA replication and repair protein RecF from Lachnospira eligens (strain ATCC 27750 / DSM 3376 / VPI C15-48 / C15-B4) (Eubacterium eligens).